The sequence spans 491 residues: MQDSSSALESYSDVTLIGAGIMSGTLGAFLTELAPEKSLAIFEKLSAVGLESSNEWNNAGTGHSALCELNYTEQKANGEVSVERAVKICEDFQLSLQLWSYLVETGRIQAPREFIHRIPHISFVQGEQNAQFLQKRYQSLAQSHLFEGMQFSRDHQQLAQWMPLMMQNRDSNETLAASYIQYGTDVNFGELTRKLFDYLVKQKAELNLNHTVKNIQRLANGEWKLTVVDQQGQKRVHRSKFVFIGGGGGALPLLQKSGITDGKNVGGFPVSGLFMVCNNPEVIAKHNAKVYGKAKLGAPPMSVPHLDTRFIEGKQSLLFGPFAGFTLKFLKQGSVLDLPTSVTPTNFCSVTKAGIKNLPLAHYLMKQAMLTKAQRMADLREFVPDAKDEDWDVVVAGQRVQVIKGGEMRFGTEVIRAEDGSLAALLGASPGASTSVKAMLDVLVSCFAAELPQWQAKLTQMLPSYGKALRNEPQLYAQIKQRVDQVLALAN.

This sequence belongs to the MQO family. Requires FAD as cofactor.

It catalyses the reaction (S)-malate + a quinone = a quinol + oxaloacetate. It participates in carbohydrate metabolism; tricarboxylic acid cycle; oxaloacetate from (S)-malate (quinone route): step 1/1. In Actinobacillus pleuropneumoniae serotype 5b (strain L20), this protein is Probable malate:quinone oxidoreductase.